The sequence spans 182 residues: MAEFPSKVSTRTSSPAQGVGASVSAMRPDLGFVRSALGVLALLQLVLGLLVWALIADTPYHLYPAYGWVMFVAVFLWLVTIVFFIIYLFQLHMKLYMVPWPLVLLVFFVAATVLYITAFVACAAAVDLTSLRGSRPYNQRSAASFFACLVMIAYGLSAFFSFQAWRGVGSNAATSQMAGGYS.

Residues methionine 1–glycine 20 are disordered. Over methionine 1–serine 35 the chain is Cytoplasmic. Polar residues predominate over residues lysine 7–alanine 16. Residue serine 9 is modified to Phosphoserine. The MARVEL domain maps to phenylalanine 32 to arginine 166. Residues alanine 36 to alanine 56 traverse the membrane as a helical segment. The Extracellular portion of the chain corresponds to aspartate 57–tryptophan 68. A helical transmembrane segment spans residues valine 69 to phenylalanine 89. The Cytoplasmic portion of the chain corresponds to glutamine 90–proline 99. The helical transmembrane segment at tryptophan 100–valine 120 threads the bilayer. The Extracellular segment spans residues alanine 121–serine 141. A helical transmembrane segment spans residues alanine 142–phenylalanine 162. The Cytoplasmic portion of the chain corresponds to glutamine 163–serine 182.

Belongs to the MAL family. As to quaternary structure, forms oligomers. In terms of processing, phosphorylated. Detected to the sciatic nerve, brain and kidney. In the sciatic nerve, found in Schwann cells; in the brain, in developing oligodendrocytes, especially of the corpus callosum, of cortical white matter, in the optic nerve and in the stratum radiatum and stratum oriens of the hippocampus. In kidney, segregated to the apical surface of renal tubular epithelia.

It localises to the cell membrane. The protein resides in the myelin membrane. The protein localises to the apical cell membrane. In terms of biological role, main component of the myelin sheath that plays an important role in myelin membrane biogenesis and myelination. Plays an essential function in apical endocytosis. Regulates epithelial development through the regulation of apical endocytosis. Part of the intracellular machinery that mediates basolateral-to-apical transport of ICAM-1, an essential adhesion receptor in epithelial cells, from the subapical compartment in hepatic epithelial cells. The polypeptide is Plasmolipin (Pllp) (Rattus norvegicus (Rat)).